The chain runs to 597 residues: uncharacterized protein (597 aa).

Disordered regions lie at residues 165 to 197 (NSRA…IFSK) and 278 to 344 (ERSS…RGTL). Over residues 169–178 (VPPPAPPNPP) the composition is skewed to pro residues. Residues 179-189 (KMEKHMSHDTS) show a composition bias toward basic and acidic residues. Over residues 293–313 (STEVSITSSSPSPSSSSSTST) the composition is skewed to low complexity. Residues 402 to 465 (WSLDDVLLWL…LDDLSKIIEN (64 aa)) enclose the SAM domain. The tract at residues 576–597 (EESQQKESSSSGISSSPQTPTE) is disordered. A compositionally biased stretch (low complexity) spans 581-597 (KESSSSGISSSPQTPTE).

This is an uncharacterized protein from Caenorhabditis elegans.